A 320-amino-acid chain; its full sequence is Lipoyl synthase (320 aa).

The interval Met-1 to Lys-28 is disordered. The segment covering Ala-19–Lys-28 has biased composition (basic and acidic residues). Residues Cys-59, Cys-64, Cys-70, Cys-85, Cys-89, Cys-92, and Ser-298 each contribute to the [4Fe-4S] cluster site. The Radical SAM core domain occupies Trp-71 to Leu-287.

The protein belongs to the radical SAM superfamily. Lipoyl synthase family. It depends on [4Fe-4S] cluster as a cofactor.

The protein resides in the cytoplasm. It catalyses the reaction [[Fe-S] cluster scaffold protein carrying a second [4Fe-4S](2+) cluster] + N(6)-octanoyl-L-lysyl-[protein] + 2 oxidized [2Fe-2S]-[ferredoxin] + 2 S-adenosyl-L-methionine + 4 H(+) = [[Fe-S] cluster scaffold protein] + N(6)-[(R)-dihydrolipoyl]-L-lysyl-[protein] + 4 Fe(3+) + 2 hydrogen sulfide + 2 5'-deoxyadenosine + 2 L-methionine + 2 reduced [2Fe-2S]-[ferredoxin]. It functions in the pathway protein modification; protein lipoylation via endogenous pathway; protein N(6)-(lipoyl)lysine from octanoyl-[acyl-carrier-protein]: step 2/2. Functionally, catalyzes the radical-mediated insertion of two sulfur atoms into the C-6 and C-8 positions of the octanoyl moiety bound to the lipoyl domains of lipoate-dependent enzymes, thereby converting the octanoylated domains into lipoylated derivatives. The chain is Lipoyl synthase from Bartonella henselae (strain ATCC 49882 / DSM 28221 / CCUG 30454 / Houston 1) (Rochalimaea henselae).